The sequence spans 329 residues: Alpha/beta hydrolase domain-containing protein 17C (329 aa).

Residues 46–85 form a disordered region; sequence APEQRGPGAPAPASAASTSSASAAAQPAPQQPEEGGAGPG. Residues 51-79 are compositionally biased toward low complexity; that stretch reads GPGAPAPASAASTSSASAAAQPAPQQPEE. Catalysis depends on charge relay system residues Ser-211, Asp-276, and His-305.

It belongs to the AB hydrolase superfamily. ABHD17 family. Post-translationally, palmitoylated on cysteine residues located in a cysteine cluster at the N-terminus which promotes membrane localization. Palmitoylation is required for post-synaptic localization and for depalmitoylating activity towards DLG4/PSD95.

Its subcellular location is the recycling endosome membrane. The protein resides in the cell projection. It localises to the dendritic spine. The protein localises to the postsynaptic density membrane. It catalyses the reaction S-hexadecanoyl-L-cysteinyl-[protein] + H2O = L-cysteinyl-[protein] + hexadecanoate + H(+). Its function is as follows. Hydrolyzes fatty acids from S-acylated cysteine residues in proteins. Has depalmitoylating activity towards NRAS and DLG4/PSD95. The polypeptide is Alpha/beta hydrolase domain-containing protein 17C (Bos taurus (Bovine)).